An 80-amino-acid chain; its full sequence is Small ribosomal subunit protein bS18 (80 aa).

The protein belongs to the bacterial ribosomal protein bS18 family. Part of the 30S ribosomal subunit. Forms a tight heterodimer with protein bS6.

In terms of biological role, binds as a heterodimer with protein bS6 to the central domain of the 16S rRNA, where it helps stabilize the platform of the 30S subunit. The sequence is that of Small ribosomal subunit protein bS18 from Acholeplasma laidlawii (strain PG-8A).